A 117-amino-acid polypeptide reads, in one-letter code: Immunity protein BC_0921 (117 aa).

As to quaternary structure, probably interacts with cognate toxin BC_0920 but not with other non-cognate toxins. The interaction inhibits the toxic activity of BC_0920.

The protein localises to the cytoplasm. In terms of biological role, immunity component of an LXG toxin-immunity module. Neutralizes the RNase activity of cognate toxin BC_0920. Probably does not have immunity protein activity on other toxins with the LXG domain. The polypeptide is Immunity protein BC_0921 (Bacillus cereus (strain ATCC 14579 / DSM 31 / CCUG 7414 / JCM 2152 / NBRC 15305 / NCIMB 9373 / NCTC 2599 / NRRL B-3711)).